We begin with the raw amino-acid sequence, 514 residues long: Type-2 serine--tRNA ligase (514 aa).

Residue Ala313 coordinates L-serine. Residue Cys315 participates in Zn(2+) binding. Position 344 (Arg344) interacts with L-serine. ATP is bound by residues 344 to 346 (RWE) and 355 to 356 (RV). 361–363 (RGE) provides a ligand contact to L-serine. Residues Glu363 and Cys470 each contribute to the Zn(2+) site. An ATP-binding site is contributed by Arg477.

The protein belongs to the class-II aminoacyl-tRNA synthetase family. Type-2 seryl-tRNA synthetase subfamily. In terms of assembly, homodimer. Zn(2+) serves as cofactor.

The protein localises to the cytoplasm. The catalysed reaction is tRNA(Ser) + L-serine + ATP = L-seryl-tRNA(Ser) + AMP + diphosphate + H(+). It carries out the reaction tRNA(Sec) + L-serine + ATP = L-seryl-tRNA(Sec) + AMP + diphosphate + H(+). It participates in aminoacyl-tRNA biosynthesis; selenocysteinyl-tRNA(Sec) biosynthesis; L-seryl-tRNA(Sec) from L-serine and tRNA(Sec): step 1/1. Catalyzes the attachment of serine to tRNA(Ser). Is also able to aminoacylate tRNA(Sec) with serine, to form the misacylated tRNA L-seryl-tRNA(Sec), which will be further converted into selenocysteinyl-tRNA(Sec). This is Type-2 serine--tRNA ligase from Methanococcus maripaludis (strain C7 / ATCC BAA-1331).